The chain runs to 324 residues: Zinc metalloproteinase leucurolysin-B (324 aa).

A Peptidase M12B domain is found at D1 to P119. D11 is a Ca(2+) binding site. Intrachain disulfides connect C34–C114, C74–C98, and C76–C81. H59 serves as a coordination point for Zn(2+). E60 is a catalytic residue. Residues H63 and H69 each contribute to the Zn(2+) site. An N-linked (GlcNAc...) asparagine glycan is attached at N97. 8 residues coordinate Ca(2+): C114, N117, V129, N132, L134, E136, E139, and D142. One can recognise a Disintegrin domain in the interval P127–N213. 13 disulfides stabilise this stretch: C130–C159, C141–C154, C143–C149, C153–C176, C167–C173, C172–C198, C185–C205, C192–C224, C217–C229, C236–C286, C251–C295, C264–C274, and C281–C315. Residues E191–D193 carry the D/ECD-tripeptide motif. N-linked (GlcNAc...) asparagine glycans are attached at residues N296 and N305.

Belongs to the venom metalloproteinase (M12B) family. P-III subfamily. P-IIIa sub-subfamily. Monomer. Zn(2+) serves as cofactor. In terms of processing, N-glycosylated. Post-translationally, the N-terminus is blocked. In terms of tissue distribution, expressed by the venom gland.

The protein resides in the secreted. With respect to regulation, inhibited by EDTA, but not by PMSF. Pre-incubation with 2 mM DTT completely abolishes activity. In terms of biological role, snake venom zinc metalloproteinase that acts as a potent hemorrhagic toxin. Hydrolyzes the insulin B chain at the 14-Ala-|-Leu-15 bond but not the 16-Tyr-|-Leu-17 bond. Degrades the alpha-chain of fibrin and hydrolyzes the Aalpha-chain of fibrinogen (FGA) while leaving the beta and gamma chains unaffected. Degrades type-I collagen and its gelatin. Degrades the alpha-1 chain of type-IV collagen and its gelatin but not the alpha-2 chain. Degrades plasma fibronectin, plasma vitronectin and basement membrane enactin. It inhibits collagen-induced platelet aggregation. In Bothrops leucurus (Whitetail lancehead), this protein is Zinc metalloproteinase leucurolysin-B.